The sequence spans 86 residues: Large ribosomal subunit protein uL23c (86 aa).

It belongs to the universal ribosomal protein uL23 family. In terms of assembly, part of the 50S ribosomal subunit.

It localises to the plastid. It is found in the chloroplast. In terms of biological role, binds to 23S rRNA. This chain is Large ribosomal subunit protein uL23c (rpl23), found in Chlorella vulgaris (Green alga).